Reading from the N-terminus, the 382-residue chain is Putative glutamate--cysteine ligase 2-1 (382 aa).

Belongs to the glutamate--cysteine ligase type 2 family. YbdK subfamily.

The enzyme catalyses L-cysteine + L-glutamate + ATP = gamma-L-glutamyl-L-cysteine + ADP + phosphate + H(+). In terms of biological role, ATP-dependent carboxylate-amine ligase which exhibits weak glutamate--cysteine ligase activity. This Nocardioides sp. (strain ATCC BAA-499 / JS614) protein is Putative glutamate--cysteine ligase 2-1.